The primary structure comprises 559 residues: uncharacterized protein (559 aa).

2 disordered regions span residues 315–360 (TDDA…ERDI) and 454–559 (DKID…STEN). Residues 320–329 (NENSDNSMNT) are compositionally biased toward polar residues. Over residues 348–357 (DNNDDSDDSE) the composition is skewed to acidic residues. The stretch at 433–495 (ELKIQEMEKI…KRRQKRSQRS (63 aa)) forms a coiled coil. Positions 454 to 501 (DKIDMDQIKSEMSRRRDESNKRRDEKRKDREEKRRQKRSQRSDTRKQG) are enriched in basic and acidic residues. The span at 507–527 (SDEATSDQTQSTDSNNTTQTA) shows a compositional bias: low complexity.

The protein localises to the virion. This is an uncharacterized protein from Acanthamoeba polyphaga mimivirus (APMV).